Reading from the N-terminus, the 345-residue chain is S-adenosylmethionine:tRNA ribosyltransferase-isomerase (345 aa).

Belongs to the QueA family. In terms of assembly, monomer.

The protein localises to the cytoplasm. The catalysed reaction is 7-aminomethyl-7-carbaguanosine(34) in tRNA + S-adenosyl-L-methionine = epoxyqueuosine(34) in tRNA + adenine + L-methionine + 2 H(+). The protein operates within tRNA modification; tRNA-queuosine biosynthesis. In terms of biological role, transfers and isomerizes the ribose moiety from AdoMet to the 7-aminomethyl group of 7-deazaguanine (preQ1-tRNA) to give epoxyqueuosine (oQ-tRNA). This chain is S-adenosylmethionine:tRNA ribosyltransferase-isomerase, found in Shewanella sp. (strain ANA-3).